Here is a 278-residue protein sequence, read N- to C-terminus: Large ribosomal subunit protein uL2 (278 aa).

Disordered stretches follow at residues 1–53 (MAIR…TTRH) and 224–278 (VVMN…NKKR). Residues 23 to 33 (EITRSTPEKSL) are compositionally biased toward basic and acidic residues. Residues 258–267 (RNPNRYSNNM) are compositionally biased toward polar residues. A compositionally biased stretch (basic residues) spans 269 to 278 (VRRRRPNKKR).

This sequence belongs to the universal ribosomal protein uL2 family. In terms of assembly, part of the 50S ribosomal subunit. Forms a bridge to the 30S subunit in the 70S ribosome.

In terms of biological role, one of the primary rRNA binding proteins. Required for association of the 30S and 50S subunits to form the 70S ribosome, for tRNA binding and peptide bond formation. It has been suggested to have peptidyltransferase activity; this is somewhat controversial. Makes several contacts with the 16S rRNA in the 70S ribosome. The polypeptide is Large ribosomal subunit protein uL2 (Corynebacterium aurimucosum (strain ATCC 700975 / DSM 44827 / CIP 107346 / CN-1) (Corynebacterium nigricans)).